A 389-amino-acid polypeptide reads, in one-letter code: Phospho-N-acetylmuramoyl-pentapeptide-transferase (389 aa).

The next 10 helical transmembrane spans lie at 25 to 45 (RAVM…PWVI), 73 to 93 (TMGG…WADL), 97 to 117 (FIWI…VDDY), 135 to 155 (FWQT…VSEI), 190 to 210 (VSYP…IVGS), 222 to 242 (GLVI…AYVM), 258 to 278 (GAGE…AFLW), 286 to 306 (VFMG…IAVI), 311 to 331 (IVLF…MMQV), and 366 to 386 (QVVV…LSSL).

The protein belongs to the glycosyltransferase 4 family. MraY subfamily. Mg(2+) is required as a cofactor.

Its subcellular location is the cell inner membrane. The enzyme catalyses UDP-N-acetyl-alpha-D-muramoyl-L-alanyl-gamma-D-glutamyl-meso-2,6-diaminopimeloyl-D-alanyl-D-alanine + di-trans,octa-cis-undecaprenyl phosphate = di-trans,octa-cis-undecaprenyl diphospho-N-acetyl-alpha-D-muramoyl-L-alanyl-D-glutamyl-meso-2,6-diaminopimeloyl-D-alanyl-D-alanine + UMP. The protein operates within cell wall biogenesis; peptidoglycan biosynthesis. Catalyzes the initial step of the lipid cycle reactions in the biosynthesis of the cell wall peptidoglycan: transfers peptidoglycan precursor phospho-MurNAc-pentapeptide from UDP-MurNAc-pentapeptide onto the lipid carrier undecaprenyl phosphate, yielding undecaprenyl-pyrophosphoryl-MurNAc-pentapeptide, known as lipid I. In Polynucleobacter asymbioticus (strain DSM 18221 / CIP 109841 / QLW-P1DMWA-1) (Polynucleobacter necessarius subsp. asymbioticus), this protein is Phospho-N-acetylmuramoyl-pentapeptide-transferase.